We begin with the raw amino-acid sequence, 776 residues long: Photosystem I P700 chlorophyll a apoprotein A1 (776 aa).

8 helical membrane-spanning segments follow: residues 76-99, 162-185, 201-225, 309-327, 368-391, 407-433, 455-477, and 557-575; these read IFSA…FHGA, LMAL…FHYH, LQHH…HVAN, VAHH…GHVY, WHAQ…HHMY, LGLF…IAVI, AIIS…LYIH, and LMIH…LILL. Cys599 and Cys608 together coordinate [4Fe-4S] cluster. Transmembrane regions (helical) follow at residues 615–636 and 690–712; these read HVFL…YFSW and LSGY…MFLF. His701 contacts divinylchlorophyll a'. Divinyl chlorophyll a is bound by residues Met709 and Tyr717. Trp718 is a binding site for phylloquinone. A helical membrane pass occupies residues 750–770; sequence AVGVTHFLFGGIVTTWAFFHA.

The protein belongs to the PsaA/PsaB family. In terms of assembly, the PsaA/B heterodimer binds the P700 chlorophyll special pair and subsequent electron acceptors. PSI consists of a core antenna complex that captures photons, and an electron transfer chain that converts photonic excitation into a charge separation. The cyanobacterial PSI reaction center is composed of one copy each of PsaA,B,C,D,E,F,I,J,K,L,M and X, and forms trimeric complexes. PSI electron transfer chain: 5 divinyl chlorophyll a, 1 divinyl chlorophyll a', 2 phylloquinones and 3 4Fe-4S clusters. PSI core antenna: 90 divinyl chlorophyll a, 22 carotenoids, 3 phospholipids and 1 galactolipid. P700 is a divinyl chlorophyll a/divinyl chlorophyll a' dimer, A0 is one or more chlorophyll divinyl a, A1 is one or both phylloquinones and FX is a shared 4Fe-4S iron-sulfur center. is required as a cofactor.

Its subcellular location is the cellular thylakoid membrane. The enzyme catalyses reduced [plastocyanin] + hnu + oxidized [2Fe-2S]-[ferredoxin] = oxidized [plastocyanin] + reduced [2Fe-2S]-[ferredoxin]. Functionally, psaA and PsaB bind P700, the primary electron donor of photosystem I (PSI), as well as the electron acceptors A0, A1 and FX. PSI is a plastocyanin/cytochrome c6-ferredoxin oxidoreductase, converting photonic excitation into a charge separation, which transfers an electron from the donor P700 chlorophyll pair to the spectroscopically characterized acceptors A0, A1, FX, FA and FB in turn. Oxidized P700 is reduced on the lumenal side of the thylakoid membrane by plastocyanin or cytochrome c6. This Prochlorococcus marinus (strain MIT 9313) protein is Photosystem I P700 chlorophyll a apoprotein A1.